The following is a 125-amino-acid chain: Small ribosomal subunit protein uS13 (125 aa).

Residues 92-125 form a disordered region; the sequence is RRSLPARGQRTRTNARTRKGKRKTVAGKKKAGKK.

The protein belongs to the universal ribosomal protein uS13 family. In terms of assembly, part of the 30S ribosomal subunit. Forms a loose heterodimer with protein S19. Forms two bridges to the 50S subunit in the 70S ribosome.

Functionally, located at the top of the head of the 30S subunit, it contacts several helices of the 16S rRNA. In the 70S ribosome it contacts the 23S rRNA (bridge B1a) and protein L5 of the 50S subunit (bridge B1b), connecting the 2 subunits; these bridges are implicated in subunit movement. Contacts the tRNAs in the A and P-sites. The polypeptide is Small ribosomal subunit protein uS13 (Chlorobaculum parvum (strain DSM 263 / NCIMB 8327) (Chlorobium vibrioforme subsp. thiosulfatophilum)).